The chain runs to 691 residues: Two-component response regulator ORR21 (691 aa).

The Response regulatory domain maps to 17–132 (KVLVVDDDPT…ELKNIWQHVI (116 aa)). Position 68 is a 4-aspartylphosphate (Asp-68). Residues 139–155 (NKEHEHSGSLDDTDRTR) show a composition bias toward basic and acidic residues. 2 disordered regions span residues 139–204 (NKEH…KKPR) and 616–647 (SHPG…HGFV). The myb-like GARP DNA-binding region spans 199 to 258 (TSKKPRVVWSVELHQQFVNAVNHLGIDKAVPKKILELMNVPGLTRENVASHLQKFRLYLK). The segment covering 616–628 (SHPGSSSSSFQSS) has biased composition (low complexity).

It belongs to the ARR family. Type-B subfamily. Two-component system major event consists of a His-to-Asp phosphorelay between a sensor histidine kinase (HK) and a response regulator (RR). In plants, the His-to-Asp phosphorelay involves an additional intermediate named Histidine-containing phosphotransfer protein (HPt). This multistep phosphorelay consists of a His-Asp-His-Asp sequential transfer of a phosphate group between first a His and an Asp of the HK protein, followed by the transfer to a conserved His of the HPt protein and finally the transfer to an Asp in the receiver domain of the RR protein.

It is found in the nucleus. In terms of biological role, transcriptional activator that binds specific DNA sequence. Functions as a response regulator involved in His-to-Asp phosphorelay signal transduction system. Phosphorylation of the Asp residue in the receiver domain activates the ability of the protein to promote the transcription of target genes. May directly activate some type-A response regulators in response to cytokinins. The protein is Two-component response regulator ORR21 of Oryza sativa subsp. indica (Rice).